We begin with the raw amino-acid sequence, 550 residues long: Arginine--tRNA ligase (550 aa).

A 'HIGH' region motif is present at residues 130-140 (ANPTGPIHIGG).

It belongs to the class-I aminoacyl-tRNA synthetase family. Monomer.

Its subcellular location is the cytoplasm. It carries out the reaction tRNA(Arg) + L-arginine + ATP = L-arginyl-tRNA(Arg) + AMP + diphosphate. The polypeptide is Arginine--tRNA ligase (argS) (Mycolicibacterium smegmatis (strain ATCC 700084 / mc(2)155) (Mycobacterium smegmatis)).